A 1033-amino-acid polypeptide reads, in one-letter code: Complement receptor type 2 (1033 aa).

A signal peptide spans 1-20 (MGAAGLLGVFLALVAPGVLG). 15 consecutive Sushi domains span residues 21-84 (ISCG…KCEY), 89-148 (SSCP…TCVS), 152-212 (LECP…TCEE), 213-273 (ARCK…VCEE), 274-344 (IFCP…RCEL), 349-408 (VQCP…VCEK), 409-468 (ECQA…QCKV), 469-524 (AACE…LCKE), 525-595 (ITCP…LCKL), 600-659 (VQCS…VCEK), 660-716 (ETCQ…LCKV), 717-781 (IHCH…QCLR), 786-845 (TRCP…TCIK), 849-909 (IGCP…HCKE), and 910-970 (VNCS…VCRS). Topologically, residues 21-971 (ISCGSPPPIL…NPPLAVCRSR (951 aa)) are extracellular. 28 cysteine pairs are disulfide-bonded: cysteine 23/cysteine 65, cysteine 51/cysteine 82, cysteine 91/cysteine 132, cysteine 118/cysteine 146, cysteine 154/cysteine 197, cysteine 183/cysteine 210, cysteine 215/cysteine 256, cysteine 242/cysteine 271, cysteine 276/cysteine 325, cysteine 305/cysteine 342, cysteine 351/cysteine 393, cysteine 379/cysteine 406, cysteine 410/cysteine 453, cysteine 439/cysteine 466, cysteine 471/cysteine 509, cysteine 495/cysteine 522, cysteine 527/cysteine 576, cysteine 556/cysteine 593, cysteine 602/cysteine 644, cysteine 630/cysteine 657, cysteine 662/cysteine 699, cysteine 685/cysteine 714, cysteine 719/cysteine 762, cysteine 748/cysteine 779, cysteine 788/cysteine 830, cysteine 816/cysteine 843, cysteine 851/cysteine 894, and cysteine 880/cysteine 907. Asparagine 121 and asparagine 127 each carry an N-linked (GlcNAc...) asparagine glycan. An N-linked (GlcNAc...) asparagine glycan is attached at asparagine 294. Asparagine 372 is a glycosylation site (N-linked (GlcNAc...) asparagine). N-linked (GlcNAc...) asparagine glycosylation occurs at asparagine 492. Asparagine 623 is a glycosylation site (N-linked (GlcNAc...) asparagine). Residue asparagine 682 is glycosylated (N-linked (GlcNAc...) asparagine). N-linked (GlcNAc...) asparagine glycans are attached at residues asparagine 800, asparagine 823, and asparagine 861. Asparagine 911 carries N-linked (GlcNAc...) asparagine glycosylation. Cystine bridges form between cysteine 912/cysteine 955 and cysteine 941/cysteine 968. The helical transmembrane segment at 972-999 (SLAPVLCGIAAGLILLTFLIVITLYVIS) threads the bilayer. The Cytoplasmic segment spans residues 1000–1033 (KHRARNYYTDTSQKEAFHLEAREVYSVDPYNPAS).

This sequence belongs to the receptors of complement activation (RCA) family. As to quaternary structure, interacts (via Sushi domain 1 and 2) with C3. Interacts with CD19. Part of a complex composed of CD19, CR2/CD21, CD81 and IFITM1/CD225 in the membrane of mature B-cells. Interacts (via Sushi domain 1 and 2) with FCER2 (via the C-terminus). Interacts with CD23. Interacts with FCRL5. Interacts with CR1. Interacts with INFNA1. (Microbial infection) Interacts with Epstein-Barr virus gp350 protein. As to expression, mature B-lymphocytes, T-lymphocytes, pharyngeal epithelial cells, astrocytes and follicular dendritic cells of the spleen.

The protein resides in the cell membrane. In terms of biological role, serves as a receptor for various ligands including complement component CD3d, HNRNPU OR IFNA1. When C3d is bound to antigens, attaches to C3d on B-cell surface and thereby facilitates the recognition and uptake of antigens by B-cells. This interaction enhances B-cell activation and subsequent immune responses. Forms a complex with several partners on the surface of B-cells including CD19, FCRL5 and CD81, to form the B-cell coreceptor complex that plays a crucial role in B-cell activation and signaling. Also induces specific intracellular signaling separately from the BCR and CD19 by activating the tyrosine kinase SRC, which then phosphorylates nucleolin/NCL and triggers AKT and GSK3 kinase activities in a SYK/CD19-independent manner. Acts as a ligand for CD23 (FcepsilonRII), a low-affinity receptor for IgE, which is expressed on B-cells and other immune cells, and thus participates in the regulation of IgE production. (Microbial infection) Acts as a receptor for Epstein-Barr virus. This chain is Complement receptor type 2 (CR2), found in Homo sapiens (Human).